The primary structure comprises 321 residues: Biotin synthase (321 aa).

Positions R37–R264 constitute a Radical SAM core domain. Positions 52, 56, and 59 each coordinate [4Fe-4S] cluster. [2Fe-2S] cluster is bound by residues C96, C127, C187, and R259.

The protein belongs to the radical SAM superfamily. Biotin synthase family. In terms of assembly, homodimer. [4Fe-4S] cluster serves as cofactor. The cofactor is [2Fe-2S] cluster.

It carries out the reaction (4R,5S)-dethiobiotin + (sulfur carrier)-SH + 2 reduced [2Fe-2S]-[ferredoxin] + 2 S-adenosyl-L-methionine = (sulfur carrier)-H + biotin + 2 5'-deoxyadenosine + 2 L-methionine + 2 oxidized [2Fe-2S]-[ferredoxin]. Its pathway is cofactor biosynthesis; biotin biosynthesis; biotin from 7,8-diaminononanoate: step 2/2. Functionally, catalyzes the conversion of dethiobiotin (DTB) to biotin by the insertion of a sulfur atom into dethiobiotin via a radical-based mechanism. The chain is Biotin synthase from Coxiella burnetii (strain CbuK_Q154) (Coxiella burnetii (strain Q154)).